We begin with the raw amino-acid sequence, 323 residues long: tRNA U34 carboxymethyltransferase (323 aa).

Carboxy-S-adenosyl-L-methionine contacts are provided by residues K90, W104, K109, G129, 182–183, M197, Y201, and R316; that span reads IE.

The protein belongs to the class I-like SAM-binding methyltransferase superfamily. CmoB family. In terms of assembly, homotetramer.

The catalysed reaction is carboxy-S-adenosyl-L-methionine + 5-hydroxyuridine(34) in tRNA = 5-carboxymethoxyuridine(34) in tRNA + S-adenosyl-L-homocysteine + H(+). In terms of biological role, catalyzes carboxymethyl transfer from carboxy-S-adenosyl-L-methionine (Cx-SAM) to 5-hydroxyuridine (ho5U) to form 5-carboxymethoxyuridine (cmo5U) at position 34 in tRNAs. This is tRNA U34 carboxymethyltransferase from Idiomarina loihiensis (strain ATCC BAA-735 / DSM 15497 / L2-TR).